The following is a 149-amino-acid chain: uncharacterized protein (149 aa).

The HotDog ACOT-type domain occupies 16–128 (PAGEPAIRVI…LFTFVAIDED (113 aa)).

This sequence belongs to the acyl coenzyme A hydrolase family.

This is an uncharacterized protein from Zymomonas mobilis subsp. mobilis (strain ATCC 31821 / ZM4 / CP4).